The chain runs to 460 residues: MKTFTPRPYQHLIINHLLDIKRSNVWAGMGMGKTAATLTALENLYLSGSETKPTLVLAPLRVAQSTWPDEALKWSHLRNIEVQPIIGSAKARIAALKNTHASVFTVNYDNLVWLVDILGDTWPFGTIIADESTRLKSFRLRKGGKRTAALAKIAHKSVHRWVNLTGTPSPNGLMDLWGQAWFVDQGERLGRTYNAFTSRWFKRIQLPGQQWSRFEPLGFAHLQIPLALSDVTLSLDAADWFDIDEPIHNVINVELPAKARAHYHAMEKELFLELGESAIEALNAAAKTIKILQIASGAIYSDDNRNWTEIHDAKIQALESIVNESGGTPVLVAYHWKHDLERLLKAFPKGKNLDANPRTLTDWNNGKIPLLFAHPASCGHGLNLQDGGNILVFFSHWWDLEQYQQIIERIGPTRQAQAGHNRPVFIHHIVAKDTLDEVVMERRNSKRAIQDLLLEAMKRK.

A Helicase ATP-binding domain is found at 14–186 (INHLLDIKRS…WGQAWFVDQG (173 aa)).

The chain is Putative protein p41 (41) from Escherichia coli (Bacteriophage APSE-1).